A 64-amino-acid chain; its full sequence is Disintegrin VA6 (64 aa).

The 64-residue stretch at 1 to 64 (NSANPCCDPV…SDCPRNPYKS (64 aa)) folds into the Disintegrin domain. 4 disulfides stabilise this stretch: Cys6–Cys29, Cys20–Cys26, Cys25–Cys50, and Cys38–Cys57. The Cell attachment site signature appears at 42–44 (RGD).

It belongs to the venom metalloproteinase (M12B) family. P-II subfamily. P-IId sub-subfamily. Homodimer; disulfide-linked. Expressed by the venom gland.

Its subcellular location is the secreted. Poor inhibitor of platelet aggregation. The disintegrin inhibits the adhesion of cells expressing the RGD-dependent integrin alpha-5/beta-1 (ITGA5/ITGB1) to immobilized fibronectin. Inhibition on alpha-IIb/beta-3 (ITGA2B/ITGB3) is low, and there is no inhibition on alpha-1/beta-1 (ITGA1/ITGB1), alpha-2/beta-1 (ITGA2/ITGB1) and alpha-6/beta-1 (ITGA6/ITGB1). This Vipera ammodytes ammodytes (Western sand viper) protein is Disintegrin VA6.